The sequence spans 102 residues: Small ribosomal subunit protein uS10 (102 aa).

The protein belongs to the universal ribosomal protein uS10 family. Part of the 30S ribosomal subunit.

Involved in the binding of tRNA to the ribosomes. In Micrococcus luteus (strain ATCC 4698 / DSM 20030 / JCM 1464 / CCM 169 / CCUG 5858 / IAM 1056 / NBRC 3333 / NCIMB 9278 / NCTC 2665 / VKM Ac-2230) (Micrococcus lysodeikticus), this protein is Small ribosomal subunit protein uS10.